Reading from the N-terminus, the 581-residue chain is DNA primase (581 aa).

A CHC2-type zinc finger spans residues 40–64 (CPFHNEKTPSFTVNGEKQFYHCFGC). A Toprim domain is found at 259–341 (NRLLVVEGYM…GRQLRFMFLP (83 aa)). Residues E265, D309, and D311 each contribute to the Mg(2+) site.

Belongs to the DnaG primase family. Monomer. Interacts with DnaB. The cofactor is Zn(2+). Mg(2+) serves as cofactor.

The enzyme catalyses ssDNA + n NTP = ssDNA/pppN(pN)n-1 hybrid + (n-1) diphosphate.. Its function is as follows. RNA polymerase that catalyzes the synthesis of short RNA molecules used as primers for DNA polymerase during DNA replication. This is DNA primase from Shigella flexneri.